A 58-amino-acid chain; its full sequence is MAQPKRRWSKQRTHKHRANWKLEIPNLTECPQCHEMKLPHRVCPNCGYYRNRKVVNQD.

The protein belongs to the bacterial ribosomal protein bL32 family.

This chain is Large ribosomal subunit protein bL32, found in Caldicellulosiruptor bescii (strain ATCC BAA-1888 / DSM 6725 / KCTC 15123 / Z-1320) (Anaerocellum thermophilum).